The chain runs to 293 residues: 3-hydroxybutyryl-CoA dehydrogenase (293 aa).

The protein belongs to the 3-hydroxyacyl-CoA dehydrogenase family.

The catalysed reaction is (3S)-3-hydroxybutanoyl-CoA + NADP(+) = acetoacetyl-CoA + NADPH + H(+). Its pathway is lipid metabolism; butanoate metabolism. The polypeptide is 3-hydroxybutyryl-CoA dehydrogenase (hbdA) (Bradyrhizobium diazoefficiens (strain JCM 10833 / BCRC 13528 / IAM 13628 / NBRC 14792 / USDA 110)).